Here is a 522-residue protein sequence, read N- to C-terminus: Cytochrome bd-I ubiquinol oxidase subunit 1 (522 aa).

Met-1 carries the N-formylmethionine modification. The Cytoplasmic segment spans residues 1 to 22 (MLDIVELSRLQFALTAMYHFLF). Residue His-19 participates in heme b binding. Residues 23–42 (VPLTLGMAFLLAIMETVYVL) form a helical membrane-spanning segment. Residues 43-94 (SGKQIYKDMTKFWGKLFGINFALGVATGLTMEFQFGTNWSYYSHYVGDIFGA) lie on the Periplasmic side of the membrane. A helical membrane pass occupies residues 95–114 (PLAIEGLMAFFLESTFVGLF). At 115 to 129 (FFGWDRLGKVQHMCV) the chain is on the cytoplasmic side. The chain crosses the membrane as a helical span at residues 130-149 (TWLVALGSNLSALWILVANG). Residues 150 to 187 (WMQNPIASDFNFETMRMEMVSFSELVLNPVAQVKFVHT) lie on the Periplasmic side of the membrane. His-186 is a binding site for heme b. A helical membrane pass occupies residues 188 to 207 (VASGYVTGAMFILGISAWYM). Topologically, residues 208–219 (LKGRDFAFAKRS) are cytoplasmic. Residues 220-239 (FAIAASFGMAAVLSVIVLGD) form a helical membrane-spanning segment. The Periplasmic portion of the chain corresponds to 240-392 (ESGYEMGDVQ…VAPLYFAFRI (153 aa)). Met-393 is a heme b binding site. A helical membrane pass occupies residues 393–412 (MVACGFLLLAIIALSFWSVI). The Cytoplasmic portion of the chain corresponds to 413–470 (RNRIGEKKWLLRAALYGIPLPWIAVEAGWFVAEYGRQPWAIGEVLPTAVANSSLTAGD). A helical membrane pass occupies residues 471-490 (LIFSMVLICGLYTLFLVAEL). Topologically, residues 491 to 522 (FLMFKFARLGPSSLKTGRYHFEQSSTTTQPAR) are periplasmic.

The protein belongs to the cytochrome ubiquinol oxidase subunit 1 family. Heterodimer of subunits I and II. Heme b is required as a cofactor. The cofactor is heme d cis-diol.

It is found in the cell inner membrane. The catalysed reaction is 2 a ubiquinol + O2(in) + 4 H(+)(in) = 2 a ubiquinone + 2 H2O(in) + 4 H(+)(out). It participates in energy metabolism; oxidative phosphorylation. Its function is as follows. A terminal oxidase that produces a proton motive force by the vectorial transfer of protons across the inner membrane. It is the component of the aerobic respiratory chain of E.coli that predominates when cells are grown at low aeration. Generates a proton motive force using protons and electrons from opposite sides of the membrane to generate H(2)O, transferring 1 proton/electron. The sequence is that of Cytochrome bd-I ubiquinol oxidase subunit 1 (cydA) from Escherichia coli O6:H1 (strain CFT073 / ATCC 700928 / UPEC).